A 397-amino-acid polypeptide reads, in one-letter code: Na(+)/H(+) antiporter NhaA (397 aa).

12 helical membrane-spanning segments follow: residues 14–34 (ASGI…NTPL), 36–56 (DLYF…FSIY), 59–79 (LLMW…GLEV), 95–115 (IFPA…FTLI), 125–145 (GWAI…GLLG), 154–174 (IFLL…IAIF), 177–197 (HELS…LIIM), 204–224 (AICA…KSGV), 254–274 (LLAP…NAGV), 292–312 (VALG…FLAV), 328–348 (IFAV…LAGL), and 365–385 (LGIL…LKLC).

It belongs to the NhaA Na(+)/H(+) (TC 2.A.33) antiporter family.

It localises to the cell inner membrane. The enzyme catalyses Na(+)(in) + 2 H(+)(out) = Na(+)(out) + 2 H(+)(in). Its function is as follows. Na(+)/H(+) antiporter that extrudes sodium in exchange for external protons. The protein is Na(+)/H(+) antiporter NhaA of Glaesserella parasuis serovar 5 (strain SH0165) (Haemophilus parasuis).